Consider the following 451-residue polypeptide: 23S rRNA (uracil(1939)-C(5))-methyltransferase RlmD (451 aa).

One can recognise a TRAM domain in the interval 20–78 (QIPAGKKQRLTIERLSDDGRGIAFLEGKTWFVAGSLAGEEVEARVLNARGKVVEARTER). [4Fe-4S] cluster contacts are provided by cysteine 91, cysteine 97, cysteine 100, and cysteine 179. Positions 283, 312, 317, 333, 360, and 381 each coordinate S-adenosyl-L-methionine. Cysteine 407 acts as the Nucleophile in catalysis.

The protein belongs to the class I-like SAM-binding methyltransferase superfamily. RNA M5U methyltransferase family. RlmD subfamily.

The catalysed reaction is uridine(1939) in 23S rRNA + S-adenosyl-L-methionine = 5-methyluridine(1939) in 23S rRNA + S-adenosyl-L-homocysteine + H(+). Catalyzes the formation of 5-methyl-uridine at position 1939 (m5U1939) in 23S rRNA. The polypeptide is 23S rRNA (uracil(1939)-C(5))-methyltransferase RlmD (Pseudomonas savastanoi pv. phaseolicola (strain 1448A / Race 6) (Pseudomonas syringae pv. phaseolicola (strain 1448A / Race 6))).